Here is a 417-residue protein sequence, read N- to C-terminus: Serine hydroxymethyltransferase (417 aa).

(6S)-5,6,7,8-tetrahydrofolate contacts are provided by residues Leu-121 and 125–127 (GHL). Lys-229 is subject to N6-(pyridoxal phosphate)lysine. 355–357 (SPF) provides a ligand contact to (6S)-5,6,7,8-tetrahydrofolate.

Belongs to the SHMT family. Homodimer. It depends on pyridoxal 5'-phosphate as a cofactor.

The protein resides in the cytoplasm. The enzyme catalyses (6R)-5,10-methylene-5,6,7,8-tetrahydrofolate + glycine + H2O = (6S)-5,6,7,8-tetrahydrofolate + L-serine. Its pathway is one-carbon metabolism; tetrahydrofolate interconversion. The protein operates within amino-acid biosynthesis; glycine biosynthesis; glycine from L-serine: step 1/1. Functionally, catalyzes the reversible interconversion of serine and glycine with tetrahydrofolate (THF) serving as the one-carbon carrier. This reaction serves as the major source of one-carbon groups required for the biosynthesis of purines, thymidylate, methionine, and other important biomolecules. Also exhibits THF-independent aldolase activity toward beta-hydroxyamino acids, producing glycine and aldehydes, via a retro-aldol mechanism. This is Serine hydroxymethyltransferase from Salmonella schwarzengrund (strain CVM19633).